The primary structure comprises 439 residues: Proline--tRNA ligase (439 aa).

Belongs to the class-II aminoacyl-tRNA synthetase family. ProS type 2 subfamily. As to quaternary structure, homodimer.

The protein localises to the cytoplasm. It catalyses the reaction tRNA(Pro) + L-proline + ATP = L-prolyl-tRNA(Pro) + AMP + diphosphate. Functionally, catalyzes the attachment of proline to tRNA(Pro) in a two-step reaction: proline is first activated by ATP to form Pro-AMP and then transferred to the acceptor end of tRNA(Pro). This chain is Proline--tRNA ligase, found in Rhodopseudomonas palustris (strain HaA2).